We begin with the raw amino-acid sequence, 142 residues long: Deoxyuridine 5'-triphosphate nucleotidohydrolase (142 aa).

Residues 62 to 64 (RSG), Asn-75, 79 to 81 (TID), and Lys-89 contribute to the substrate site.

It belongs to the dUTPase family. Mg(2+) serves as cofactor.

The catalysed reaction is dUTP + H2O = dUMP + diphosphate + H(+). The protein operates within pyrimidine metabolism; dUMP biosynthesis; dUMP from dCTP (dUTP route): step 2/2. Functionally, this enzyme is involved in nucleotide metabolism: it produces dUMP, the immediate precursor of thymidine nucleotides and it decreases the intracellular concentration of dUTP so that uracil cannot be incorporated into DNA. This Nautilia profundicola (strain ATCC BAA-1463 / DSM 18972 / AmH) protein is Deoxyuridine 5'-triphosphate nucleotidohydrolase.